The primary structure comprises 535 residues: Berberine bridge enzyme-like 27 (535 aa).

Residues 1–22 (MEILRFLLSLFIYFLLLNLSLS) form the signal peptide. Residues asparagine 18 and asparagine 66 are each glycosylated (N-linked (GlcNAc...) asparagine). Cysteines 40 and 100 form a disulfide. In terms of domain architecture, FAD-binding PCMH-type spans 78-253 (ETPKPVSIIT…LSWKIRLLDV (176 aa)). Histidine 115 bears the Pros-8alpha-FAD histidine mark. Residues asparagine 146, asparagine 215, and asparagine 439 are each glycosylated (N-linked (GlcNAc...) asparagine).

It belongs to the oxygen-dependent FAD-linked oxidoreductase family. FAD serves as cofactor. As to expression, accumulates in cell walls of etiolated hypocotyls.

It is found in the secreted. It localises to the cell wall. This Arabidopsis thaliana (Mouse-ear cress) protein is Berberine bridge enzyme-like 27.